Reading from the N-terminus, the 406-residue chain is Cysteine desulfurase (406 aa).

Position 226 is an N6-(pyridoxal phosphate)lysine (lysine 226). Cysteine 364 (cysteine persulfide intermediate) is an active-site residue.

This sequence belongs to the class-V pyridoxal-phosphate-dependent aminotransferase family. Csd subfamily. Homodimer. Interacts with SufE and the SufBCD complex composed of SufB, SufC and SufD. The interaction with SufE is required to mediate the direct transfer of the sulfur atom from the S-sulfanylcysteine. It depends on pyridoxal 5'-phosphate as a cofactor.

It localises to the cytoplasm. The catalysed reaction is (sulfur carrier)-H + L-cysteine = (sulfur carrier)-SH + L-alanine. It catalyses the reaction L-selenocysteine + AH2 = hydrogenselenide + L-alanine + A + H(+). It functions in the pathway cofactor biosynthesis; iron-sulfur cluster biosynthesis. Its function is as follows. Cysteine desulfurases mobilize the sulfur from L-cysteine to yield L-alanine, an essential step in sulfur metabolism for biosynthesis of a variety of sulfur-containing biomolecules. Component of the suf operon, which is activated and required under specific conditions such as oxidative stress and iron limitation. Acts as a potent selenocysteine lyase in vitro, that mobilizes selenium from L-selenocysteine. Selenocysteine lyase activity is however unsure in vivo. This is Cysteine desulfurase from Escherichia coli O9:H4 (strain HS).